A 104-amino-acid polypeptide reads, in one-letter code: ATP-dependent Clp protease adapter protein ClpS (104 aa).

This sequence belongs to the ClpS family. Binds to the N-terminal domain of the chaperone ClpA.

In terms of biological role, involved in the modulation of the specificity of the ClpAP-mediated ATP-dependent protein degradation. This is ATP-dependent Clp protease adapter protein ClpS from Hydrogenovibrio crunogenus (strain DSM 25203 / XCL-2) (Thiomicrospira crunogena).